The sequence spans 258 residues: Small ribosomal subunit protein uS2 (258 aa).

It belongs to the universal ribosomal protein uS2 family.

The sequence is that of Small ribosomal subunit protein uS2 from Streptococcus suis (strain 05ZYH33).